Reading from the N-terminus, the 615-residue chain is MSASTKRKRDQAEESVPAENPASTDVEKAIKPAQKQEEETSFVDLGLDPRLLQAIAQQKFAKPTLVQRKAIPLALNGQDVLAKADCGSGKTAAYVLPLLSSILKRKATDSTAFTTALILVPTRELADQVSKAIEQFASFCAKDISTAKLTDKVSSKVQRALLSNSPDIVISTPSTAWQNVNSSALSIDKLTHLILDEADLVLSYGYSEDLENLSRSVPKGVQVMMMSATLSDEVDTLKGIFRRDPTLLDLKEKEAEGEGITQFVAKCGEDEKFLLAYVIFKLKLIKGKCIIFVSDIDRCYRLKLFFEQFGIRSCILNSELPLNSRVHVVEEFNRHVYDIIIAADEKNEMLGDDEEPAETAEAQDDAKKSNEGDDAETEAKRPKKKAKKSKGGDKEYGVSRGVDFKKVSAVINFDLPTTASAYTHRIGRTARAGQTGMALSFVVPKDLYRKHMPTSTPACENDEKIMARIIRQQAKRDKEVKPYNFNMKQVDPFRYRMNDALRAVTKVAIREARTRELRQELLKSEKLKRYFEENPTELSHLRHDGELRTARQQAHLKHIPEYLMPKDGKQALTEDVGFVAMRKDKKGKGKKGRGFKVGSRKRDPLKTFKARRKTK.

Residues 1-37 are disordered; sequence MSASTKRKRDQAEESVPAENPASTDVEKAIKPAQKQE. A compositionally biased stretch (basic and acidic residues) spans 25 to 37; sequence DVEKAIKPAQKQE. The Q motif motif lies at 40–68; that stretch reads TSFVDLGLDPRLLQAIAQQKFAKPTLVQR. The Helicase ATP-binding domain maps to 71–248; it reads IPLALNGQDV…GIFRRDPTLL (178 aa). An ATP-binding site is contributed by 84 to 91; it reads ADCGSGKT. The DEAD box signature appears at 196–199; it reads DEAD. The Helicase C-terminal domain maps to 259 to 491; that stretch reads GITQFVAKCG…PYNFNMKQVD (233 aa). The segment covering 351–363 has biased composition (acidic residues); sequence GDDEEPAETAEAQ. 2 disordered regions span residues 351-396 and 583-615; these read GDDE…DKEY and KDKK…RKTK. Over residues 583 to 594 the composition is skewed to basic residues; the sequence is KDKKGKGKKGRG.

Belongs to the DEAD box helicase family. DDX56/DBP9 subfamily.

It is found in the nucleus. The protein resides in the nucleolus. The catalysed reaction is ATP + H2O = ADP + phosphate + H(+). In terms of biological role, ATP-binding RNA helicase involved in the biogenesis of 60S ribosomal subunits and is required for the normal formation of 25S and 5.8S rRNAs. This chain is ATP-dependent RNA helicase DBP9 (DBP9), found in Gibberella zeae (strain ATCC MYA-4620 / CBS 123657 / FGSC 9075 / NRRL 31084 / PH-1) (Wheat head blight fungus).